The chain runs to 671 residues: Arginine--tRNA ligase (671 aa).

The 'HIGH' region signature appears at 124 to 134; it reads PNVAKPMHVGH. The tract at residues 223-254 is disordered; the sequence is KSDAKTAKEVSDQSESDENLKPKDKKKLRKNA. Basic and acidic residues predominate over residues 224–233; the sequence is SDAKTAKEVS.

Belongs to the class-I aminoacyl-tRNA synthetase family. As to quaternary structure, monomer.

It localises to the cytoplasm. The catalysed reaction is tRNA(Arg) + L-arginine + ATP = L-arginyl-tRNA(Arg) + AMP + diphosphate. The sequence is that of Arginine--tRNA ligase from Rhodopirellula baltica (strain DSM 10527 / NCIMB 13988 / SH1).